The chain runs to 1113 residues: uncharacterized protein (1113 aa).

An ATP-binding site is contributed by 313–320 (GPPGTGKS).

The protein belongs to the DNA2/NAM7 helicase family.

This is an uncharacterized protein from Mycoplasma genitalium (strain ATCC 33530 / DSM 19775 / NCTC 10195 / G37) (Mycoplasmoides genitalium).